A 293-amino-acid polypeptide reads, in one-letter code: LysM and putative peptidoglycan-binding domain-containing protein 4 (293 aa).

Residues 1 to 214 are Extracellular-facing; the sequence is MRQKEVLAKS…VADGADCGIQ (214 aa). Residues 28–65 form a disordered region; that stretch reads FNNGSGDSGDSSEEESHQVVLRPRGKEHQKNSSQRPGA. Asn30 carries an N-linked (GlcNAc...) asparagine glycan. One can recognise a LysM domain in the interval 71–115; that stretch reads LQRELAQEDSLNKLALQYGCKVADIKKANNFIREQDLYALKSIKI. A helical membrane pass occupies residues 215–235; it reads WWNAVFLMLLIGIVLPVFYLV. Over 236-293 the chain is Cytoplasmic; that stretch reads YFKIQATGEPSNGLNATVVPNGSMTLSPVPGQAPRLAIPVPTLPASDSQVSPTTQAGA.

The protein localises to the membrane. This is LysM and putative peptidoglycan-binding domain-containing protein 4 (Lysmd4) from Mus musculus (Mouse).